The primary structure comprises 198 residues: Recombination protein RecR (198 aa).

The segment at 58 to 73 adopts a C4-type zinc-finger fold; that stretch reads CSVCGNFTDKDPCAIC. Residues 81–175 enclose the Toprim domain; the sequence is NTICVVEHPK…KVTRIAHGIP (95 aa).

It belongs to the RecR family.

Functionally, may play a role in DNA repair. It seems to be involved in an RecBC-independent recombinational process of DNA repair. It may act with RecF and RecO. In Clostridium tetani (strain Massachusetts / E88), this protein is Recombination protein RecR.